The following is a 378-amino-acid chain: Probable S-(hydroxymethyl)glutathione dehydrogenase 1 (378 aa).

Position 47 (Cys-47) interacts with Zn(2+). His-48 provides a ligand contact to NAD(+). 7 residues coordinate Zn(2+): His-69, Glu-70, Cys-99, Cys-102, Cys-105, Cys-113, and Cys-176. Residues 201-206 (GCGCVG), Asp-225, 293-295 (IGV), and 318-320 (SAF) each bind NAD(+).

This sequence belongs to the zinc-containing alcohol dehydrogenase family. Class-III subfamily. Zn(2+) serves as cofactor.

The enzyme catalyses a primary alcohol + NAD(+) = an aldehyde + NADH + H(+). It catalyses the reaction a secondary alcohol + NAD(+) = a ketone + NADH + H(+). The catalysed reaction is S-(hydroxymethyl)glutathione + NADP(+) = S-formylglutathione + NADPH + H(+). It carries out the reaction S-(hydroxymethyl)glutathione + NAD(+) = S-formylglutathione + NADH + H(+). The enzyme catalyses S-nitrosoglutathione + NADH + H(+) = S-(hydroxysulfenamide)glutathione + NAD(+). In terms of biological role, oxidizes long-chain alcohols and, in the presence of glutathione, is able to oxidize formaldehyde. Also acts as a S-nitroso-glutathione reductase by catalyzing the NADH-dependent reduction of S-nitrosoglutathione, thereby regulating protein S-nitrosylation. This Schizosaccharomyces pombe (strain 972 / ATCC 24843) (Fission yeast) protein is Probable S-(hydroxymethyl)glutathione dehydrogenase 1.